The chain runs to 425 residues: Serine--tRNA ligase (425 aa).

231–233 (TAE) lines the L-serine pocket. 262–264 (RSE) serves as a coordination point for ATP. An L-serine-binding site is contributed by Glu285. Residue 349 to 352 (EISS) coordinates ATP. Residue Ser385 participates in L-serine binding.

The protein belongs to the class-II aminoacyl-tRNA synthetase family. Type-1 seryl-tRNA synthetase subfamily. Homodimer. The tRNA molecule binds across the dimer.

Its subcellular location is the cytoplasm. The enzyme catalyses tRNA(Ser) + L-serine + ATP = L-seryl-tRNA(Ser) + AMP + diphosphate + H(+). It catalyses the reaction tRNA(Sec) + L-serine + ATP = L-seryl-tRNA(Sec) + AMP + diphosphate + H(+). Its pathway is aminoacyl-tRNA biosynthesis; selenocysteinyl-tRNA(Sec) biosynthesis; L-seryl-tRNA(Sec) from L-serine and tRNA(Sec): step 1/1. In terms of biological role, catalyzes the attachment of serine to tRNA(Ser). Is also able to aminoacylate tRNA(Sec) with serine, to form the misacylated tRNA L-seryl-tRNA(Sec), which will be further converted into selenocysteinyl-tRNA(Sec). In Halalkalibacterium halodurans (strain ATCC BAA-125 / DSM 18197 / FERM 7344 / JCM 9153 / C-125) (Bacillus halodurans), this protein is Serine--tRNA ligase.